An 81-amino-acid polypeptide reads, in one-letter code: Photosystem I iron-sulfur center (81 aa).

4Fe-4S ferredoxin-type domains are found at residues 2–31 (SHAV…MVPW) and 37–68 (GQIA…IRVY). Residues C11, C14, C17, C21, C48, C51, C54, and C58 each contribute to the [4Fe-4S] cluster site.

The cyanobacterial PSI reaction center is composed of one copy each of PsaA,B,C,D,E,F,I,J,K,L,M and X, and forms trimeric complexes. The cofactor is [4Fe-4S] cluster.

It localises to the cellular thylakoid membrane. The enzyme catalyses reduced [plastocyanin] + hnu + oxidized [2Fe-2S]-[ferredoxin] = oxidized [plastocyanin] + reduced [2Fe-2S]-[ferredoxin]. Its function is as follows. Apoprotein for the two 4Fe-4S centers FA and FB of photosystem I (PSI); essential for photochemical activity. FB is the terminal electron acceptor of PSI, donating electrons to ferredoxin. The C-terminus interacts with PsaA/B/D and helps assemble the protein into the PSI complex. Required for binding of PsaD and PsaE to PSI. PSI is a plastocyanin/cytochrome c6-ferredoxin oxidoreductase, converting photonic excitation into a charge separation, which transfers an electron from the donor P700 chlorophyll pair to the spectroscopically characterized acceptors A0, A1, FX, FA and FB in turn. The chain is Photosystem I iron-sulfur center from Synechococcus sp. (strain WH8103).